The primary structure comprises 299 residues: Taste receptor type 2 member 16 (299 aa).

Topologically, residues 1–5 (MVPTQ) are extracellular. A helical transmembrane segment spans residues 6–26 (VTIFSIIMYVLESLVIIVQSC). The Cytoplasmic portion of the chain corresponds to 27–44 (TTVAVLFREWMHFQRLSP). The helical transmembrane segment at 45–65 (VEIILISLGISHFCLQWTSML) threads the bilayer. Topologically, residues 66–82 (YNFGTYSRPVLLFWKVS) are extracellular. Residues 83–103 (VVWEFMNVLTFWLTSLLAVLY) traverse the membrane as a helical segment. Over 104 to 125 (CVKVSSFSHPVFLWLRLKILKL) the chain is Cytoplasmic. Residues 126-146 (VLWLLLGALIASCLSIIPSVV) form a helical membrane-spanning segment. Over 147–183 (KYHIQMELLTLDHLPKNSSLILRLQMFEWYFSNPFKM) the chain is Extracellular. N-linked (GlcNAc...) asparagine glycosylation occurs at Asn-163. Residues 184–204 (IGFGVPFLVFLISIILLTVSL) form a helical membrane-spanning segment. Over 205 to 233 (VQHWGQMKHYSSSSSSLRAQCTVLKSLAT) the chain is Cytoplasmic. A helical transmembrane segment spans residues 234–254 (FFIFFTSYFLTIVVSFIGTVF). At 255 to 258 (DKKS) the chain is on the extracellular side. The chain crosses the membrane as a helical span at residues 259-279 (WFWVCEAVIYGLVCIHFTSLM). The Cytoplasmic portion of the chain corresponds to 280 to 299 (MSNPTLKKALRLQFWSPESS).

Belongs to the G-protein coupled receptor T2R family. In terms of assembly, interacts with RTP3 and RTP4. Expressed in subsets of taste receptor cells of the tongue and palate epithelium and exclusively in gustducin-positive cells. Expressed in the antrum and fundus (part of the stomach), duodenum and in gastric endocrine cells.

The protein localises to the cell membrane. In terms of biological role, gustducin-coupled receptor implicated in the perception of bitter compounds in the oral cavity and the gastrointestinal tract. Signals through PLCB2 and the calcium-regulated cation channel TRPM5. This Rattus norvegicus (Rat) protein is Taste receptor type 2 member 16 (Tas2r16).